A 430-amino-acid polypeptide reads, in one-letter code: Enolase (430 aa).

(2R)-2-phosphoglycerate is bound at residue Gln-164. The active-site Proton donor is Glu-208. Mg(2+) contacts are provided by Asp-245, Glu-288, and Asp-315. The (2R)-2-phosphoglycerate site is built by Lys-340, Arg-369, Ser-370, and Lys-391. Residue Lys-340 is the Proton acceptor of the active site.

The protein belongs to the enolase family. Mg(2+) serves as cofactor.

It is found in the cytoplasm. The protein resides in the secreted. Its subcellular location is the cell surface. The catalysed reaction is (2R)-2-phosphoglycerate = phosphoenolpyruvate + H2O. It participates in carbohydrate degradation; glycolysis; pyruvate from D-glyceraldehyde 3-phosphate: step 4/5. Functionally, catalyzes the reversible conversion of 2-phosphoglycerate (2-PG) into phosphoenolpyruvate (PEP). It is essential for the degradation of carbohydrates via glycolysis. This is Enolase from Thermococcus gammatolerans (strain DSM 15229 / JCM 11827 / EJ3).